The sequence spans 512 residues: 2-isopropylmalate synthase (512 aa).

The region spanning leucine 5–valine 267 is the Pyruvate carboxyltransferase domain. Mn(2+) contacts are provided by aspartate 14, histidine 202, histidine 204, and asparagine 238. Residues lysine 393 to alanine 512 are regulatory domain.

Belongs to the alpha-IPM synthase/homocitrate synthase family. LeuA type 1 subfamily. In terms of assembly, homodimer. Requires Mn(2+) as cofactor.

The protein localises to the cytoplasm. The enzyme catalyses 3-methyl-2-oxobutanoate + acetyl-CoA + H2O = (2S)-2-isopropylmalate + CoA + H(+). It functions in the pathway amino-acid biosynthesis; L-leucine biosynthesis; L-leucine from 3-methyl-2-oxobutanoate: step 1/4. Functionally, catalyzes the condensation of the acetyl group of acetyl-CoA with 3-methyl-2-oxobutanoate (2-ketoisovalerate) to form 3-carboxy-3-hydroxy-4-methylpentanoate (2-isopropylmalate). In Chromobacterium violaceum (strain ATCC 12472 / DSM 30191 / JCM 1249 / CCUG 213 / NBRC 12614 / NCIMB 9131 / NCTC 9757 / MK), this protein is 2-isopropylmalate synthase.